Reading from the N-terminus, the 144-residue chain is MQLLVLQGPNLNMLGQREPTIYGSTSLADIHNAMREKATSAGIELSFIQSNHEGVLVDTLHAHYGKIQGIIINPGALTHYGLSLRDGLALMDVPIIEVHLSNVYAREAFRHHSVVAAIAQGQISGLGWQGYLYALDWFIQRKSA.

Tyr-22 (proton acceptor) is an active-site residue. Substrate is bound by residues Asn-73, His-79, and Asp-86. His-99 acts as the Proton donor in catalysis. Residues 100–101 (LS) and Arg-110 contribute to the substrate site.

This sequence belongs to the type-II 3-dehydroquinase family. Homododecamer.

It carries out the reaction 3-dehydroquinate = 3-dehydroshikimate + H2O. It participates in metabolic intermediate biosynthesis; chorismate biosynthesis; chorismate from D-erythrose 4-phosphate and phosphoenolpyruvate: step 3/7. Catalyzes a trans-dehydration via an enolate intermediate. This chain is 3-dehydroquinate dehydratase, found in Herpetosiphon aurantiacus (strain ATCC 23779 / DSM 785 / 114-95).